We begin with the raw amino-acid sequence, 609 residues long: Manganese lipoxygenase (609 aa).

Residues 1-16 form the signal peptide; sequence MRLLLSIAGLTTVVNA. N-linked (GlcNAc...) asparagine glycosylation is found at asparagine 24, asparagine 115, asparagine 156, and asparagine 193. The 493-residue stretch at 117–609 folds into the Lipoxygenase domain; the sequence is SLKAIQDHGG…PGVIPFYLSV (493 aa). Mn(2+) is bound by residues histidine 289 and histidine 294. The N-linked (GlcNAc...) asparagine glycan is linked to asparagine 385. Mn(2+) contacts are provided by histidine 474 and asparagine 478. An N-linked (GlcNAc...) asparagine glycan is attached at asparagine 539. Mn(2+) is bound at residue valine 609.

The protein belongs to the lipoxygenase family. Manganese lipoxygenase subfamily. Mn(2+) is required as a cofactor. N- and O-glycosylated.

It is found in the secreted. It carries out the reaction (9Z,12Z)-octadecadienoate + O2 = (9S)-hydroperoxy-(10E,12Z)-octadecadienoate. It catalyses the reaction (9Z,12Z)-octadecadienoate + O2 = (11S)-hydroperoxy-(9Z,12Z)-octadecadienoate. The enzyme catalyses (9Z,12Z)-octadecadienoate + O2 = (13R)-hydroperoxy-(9Z,11E)-octadecadienoate. The catalysed reaction is (9Z,12Z,15Z)-octadecatrienoate + O2 = (11R)-hydroperoxy-(9Z,12Z,15Z)-octadecatrienoate. Lipoxygenase that metabolizes linoleic and alpha-linolenic acids to 9-, 11- and 13-hydroperoxy fatty acids. Oxidizes linoleic acid to mainly 9S- and 13R-HPODE and alpha-linolenic acid to 11R-HPOTrE. The chain is Manganese lipoxygenase from Colletotrichum gloeosporioides (strain Cg-14) (Anthracnose fungus).